A 425-amino-acid chain; its full sequence is Multifunctional CCA protein (425 aa).

2 residues coordinate ATP: Gly8 and Arg11. Residues Gly8 and Arg11 each contribute to the CTP site. Residues Asp21 and Asp23 each contribute to the Mg(2+) site. Residues Arg91, Arg141, and Arg144 each contribute to the ATP site. Residues Arg91, Arg141, and Arg144 each contribute to the CTP site. Residues 230-331 (TGVHLMMVLD…VRLLERCDAI (102 aa)) enclose the HD domain.

The protein belongs to the tRNA nucleotidyltransferase/poly(A) polymerase family. Bacterial CCA-adding enzyme type 1 subfamily. In terms of assembly, monomer. Can also form homodimers and oligomers. Mg(2+) is required as a cofactor. Ni(2+) serves as cofactor.

The catalysed reaction is a tRNA precursor + 2 CTP + ATP = a tRNA with a 3' CCA end + 3 diphosphate. It carries out the reaction a tRNA with a 3' CCA end + 2 CTP + ATP = a tRNA with a 3' CCACCA end + 3 diphosphate. Its function is as follows. Catalyzes the addition and repair of the essential 3'-terminal CCA sequence in tRNAs without using a nucleic acid template. Adds these three nucleotides in the order of C, C, and A to the tRNA nucleotide-73, using CTP and ATP as substrates and producing inorganic pyrophosphate. tRNA 3'-terminal CCA addition is required both for tRNA processing and repair. Also involved in tRNA surveillance by mediating tandem CCA addition to generate a CCACCA at the 3' terminus of unstable tRNAs. While stable tRNAs receive only 3'-terminal CCA, unstable tRNAs are marked with CCACCA and rapidly degraded. The chain is Multifunctional CCA protein from Acidovorax ebreus (strain TPSY) (Diaphorobacter sp. (strain TPSY)).